The sequence spans 420 residues: CinA-like protein (420 aa).

Belongs to the CinA family.

The sequence is that of CinA-like protein from Chlorobium phaeobacteroides (strain BS1).